Consider the following 91-residue polypeptide: Lipolysis-activating peptide 1-alpha chain (91 aa).

A signal peptide spans 1–22 (MMKLVLFGIIVILFSLIGSIHG). Residues 24–87 (SGNYPLNPYG…VWNAVKKHCK (64 aa)) enclose the LCN-type CS-alpha/beta domain. 3 disulfide bridges follow: C38-C61, C47-C66, and C51-C68.

Belongs to the long (3 C-C) scorpion toxin superfamily. Monomer (edited version) and heterodimer (non-edited version) of this alpha chain and a beta chain (AC P84809). As to expression, expressed by the venom gland.

The protein resides in the secreted. Its function is as follows. The heterodimer non-edited LVP1 induces lipolysis in rat adipocytes. Induction of lipolysis by LVP1 appears to be mediated through the beta-2 adrenergic receptor pathway (ADRB2). Intracerebroventricular injection is not toxic to mice. Functionally, the edited BmKBTx-like, similar to beta-toxins, may modulate voltage-gated sodium channels (Nav) and may block voltage-gated potassium channels (Kv). This chain is Lipolysis-activating peptide 1-alpha chain, found in Buthus occitanus tunetanus (Common European scorpion).